The primary structure comprises 131 residues: Small ribosomal subunit protein bS16 (131 aa).

Residues P87–S131 form a disordered region. The span at A111 to S131 shows a compositional bias: low complexity.

It belongs to the bacterial ribosomal protein bS16 family.

The polypeptide is Small ribosomal subunit protein bS16 (Kineococcus radiotolerans (strain ATCC BAA-149 / DSM 14245 / SRS30216)).